The primary structure comprises 82 residues: Small ribosomal subunit protein bS16 (82 aa).

The protein belongs to the bacterial ribosomal protein bS16 family.

This is Small ribosomal subunit protein bS16 from Caldanaerobacter subterraneus subsp. tengcongensis (strain DSM 15242 / JCM 11007 / NBRC 100824 / MB4) (Thermoanaerobacter tengcongensis).